The following is a 128-amino-acid chain: Small ribosomal subunit protein uS9 (128 aa).

The segment at 105–128 (DPRSVERKKPGQPKARRRFQFSKR) is disordered. The segment covering 114–128 (PGQPKARRRFQFSKR) has biased composition (basic residues).

This sequence belongs to the universal ribosomal protein uS9 family.

In Bacteroides thetaiotaomicron (strain ATCC 29148 / DSM 2079 / JCM 5827 / CCUG 10774 / NCTC 10582 / VPI-5482 / E50), this protein is Small ribosomal subunit protein uS9.